Here is a 427-residue protein sequence, read N- to C-terminus: MSNNQTLFERAQRTIPGGVNSPVRAFRSVGGTPRFVARAQGAYFWDADGKRYIDYIGSWGPMIVGHVHPDVLAAVQRVLADGFSFGAPTEAEIEIAEEICKLVPSIEQVRMVSSGTEATMSALRLARGFTGRSRIVKFEGCYHGHADSLLVKAGSGLLTFGNPTSAGVPADVAKHTTVLEYNNVAALEEAFAAFGGEIAAVIVEPVAGNMNLVRGTPEFLNALRALTAKHGAVLIFDEVMCGFRVALGGAQQHYGITPDLTCLGKVIGGGMPAAAFGGRGDIMSHLAPLGGVYQAGTLSGNPVAVAAGLATLRLIQAPGFHDALADKTRRLADGLAAEARAAGVPFSADAIGGMFGLYFTEQVPASFADVTKSDIERFNRFFHLMLDAGVYFAPSAYEAGFVSSAHDDATLDATLDAARRAFAALRA.

Residue lysine 265 is modified to N6-(pyridoxal phosphate)lysine.

The protein belongs to the class-III pyridoxal-phosphate-dependent aminotransferase family. HemL subfamily. In terms of assembly, homodimer. It depends on pyridoxal 5'-phosphate as a cofactor.

It localises to the cytoplasm. It catalyses the reaction (S)-4-amino-5-oxopentanoate = 5-aminolevulinate. It functions in the pathway porphyrin-containing compound metabolism; protoporphyrin-IX biosynthesis; 5-aminolevulinate from L-glutamyl-tRNA(Glu): step 2/2. This is Glutamate-1-semialdehyde 2,1-aminomutase from Burkholderia pseudomallei (strain 1710b).